We begin with the raw amino-acid sequence, 221 residues long: N-(5'-phosphoribosyl)anthranilate isomerase (221 aa).

Belongs to the TrpF family.

The enzyme catalyses N-(5-phospho-beta-D-ribosyl)anthranilate = 1-(2-carboxyphenylamino)-1-deoxy-D-ribulose 5-phosphate. It functions in the pathway amino-acid biosynthesis; L-tryptophan biosynthesis; L-tryptophan from chorismate: step 3/5. The sequence is that of N-(5'-phosphoribosyl)anthranilate isomerase from Chlorobaculum tepidum (strain ATCC 49652 / DSM 12025 / NBRC 103806 / TLS) (Chlorobium tepidum).